The primary structure comprises 183 residues: Casparian strip membrane protein 2 (183 aa).

At 1-23 the chain is on the cytoplasmic side; that stretch reads MDSGEQGETSKAPLNKGVSRGVS. A helical transmembrane segment spans residues 24–44; sequence ILDLILRVIAVISTLASAIAM. The Extracellular portion of the chain corresponds to 45–71; that stretch reads GTTNETLPLFTPFIQFKARYSDLPALT. A glycan (N-linked (GlcNAc...) asparagine) is linked at N48. A helical transmembrane segment spans residues 72–92; it reads FFVVANSIVSAYLILSLPLSI. At 93-104 the chain is on the cytoplasmic side; the sequence is AHIIRSGAKYSR. The helical transmembrane segment at 105 to 125 threads the bilayer; that stretch reads LVLIIFDAAMLALVTAASSAA. Over 126-158 the chain is Extracellular; sequence TAIVYLAHKGNVRANWLAICQQLDSFCERTSGS. A helical membrane pass occupies residues 159–179; that stretch reads LVGSFGAMVLLILLILLSAMA. The Cytoplasmic portion of the chain corresponds to 180 to 183; that stretch reads LARR.

It belongs to the Casparian strip membrane proteins (CASP) family. In terms of assembly, homodimer and heterodimers.

The protein localises to the cell membrane. In terms of biological role, regulates membrane-cell wall junctions and localized cell wall deposition. Required for establishment of the Casparian strip membrane domain (CSD) and the subsequent formation of Casparian strips, a cell wall modification of the root endodermis that determines an apoplastic barrier between the intraorganismal apoplasm and the extraorganismal apoplasm and prevents lateral diffusion. This is Casparian strip membrane protein 2 from Triticum aestivum (Wheat).